Consider the following 572-residue polypeptide: DBH-like monooxygenase protein 2 homolog (572 aa).

The first 26 residues, 1–26 (MGTCLKGNMSVLSLVLFLLSVQQFWA), serve as a signal peptide directing secretion. N-linked (GlcNAc...) asparagine glycosylation is found at Asn8, Asn64, Asn187, and Asn203. The Extracellular portion of the chain corresponds to 27–552 (QEDPLLPFSE…SPPEPCVRAC (526 aa)). Positions 42-157 (HNVQLKWGFD…LPMKLIYAYG (116 aa)) constitute a DOMON domain. Tyr207 is an active-site residue. 2 disulfides stabilise this stretch: Cys209/Cys256 and Cys244/Cys263. Cu cation-binding residues include His237 and His238. His301 contacts Cu cation. A glycan (N-linked (GlcNAc...) asparagine) is linked at Asn306. Intrachain disulfides connect Cys358–Cys472 and Cys435–Cys457. His381 is a catalytic residue. 3 residues coordinate Cu cation: His381, His383, and Met456. Residues Asn468, Asn503, Asn518, and Asn534 are each glycosylated (N-linked (GlcNAc...) asparagine). A helical membrane pass occupies residues 553–571 (ATKNLAFMSLFLCLAGMWA). Ser572 is a topological domain (cytoplasmic).

Belongs to the copper type II ascorbate-dependent monooxygenase family. Requires Cu(2+) as cofactor.

Its subcellular location is the membrane. This chain is DBH-like monooxygenase protein 2 homolog (moxd2), found in Danio rerio (Zebrafish).